Consider the following 104-residue polypeptide: Pyrimidine/purine nucleoside phosphorylase (104 aa).

Belongs to the nucleoside phosphorylase PpnP family.

It carries out the reaction a purine D-ribonucleoside + phosphate = a purine nucleobase + alpha-D-ribose 1-phosphate. It catalyses the reaction adenosine + phosphate = alpha-D-ribose 1-phosphate + adenine. The enzyme catalyses cytidine + phosphate = cytosine + alpha-D-ribose 1-phosphate. The catalysed reaction is guanosine + phosphate = alpha-D-ribose 1-phosphate + guanine. It carries out the reaction inosine + phosphate = alpha-D-ribose 1-phosphate + hypoxanthine. It catalyses the reaction thymidine + phosphate = 2-deoxy-alpha-D-ribose 1-phosphate + thymine. The enzyme catalyses uridine + phosphate = alpha-D-ribose 1-phosphate + uracil. The catalysed reaction is xanthosine + phosphate = alpha-D-ribose 1-phosphate + xanthine. In terms of biological role, catalyzes the phosphorolysis of diverse nucleosides, yielding D-ribose 1-phosphate and the respective free bases. Can use uridine, adenosine, guanosine, cytidine, thymidine, inosine and xanthosine as substrates. Also catalyzes the reverse reactions. The sequence is that of Pyrimidine/purine nucleoside phosphorylase from Geobacter metallireducens (strain ATCC 53774 / DSM 7210 / GS-15).